A 263-amino-acid polypeptide reads, in one-letter code: Auxin-responsive protein IAA3 (263 aa).

Disordered stretches follow at residues 1–54 and 76–121; these read MSPP…RRPA and RVFP…PAAK. The span at 28–38 shows a compositional bias: basic and acidic residues; the sequence is RADDVDLKGTE. The EAR-like (transcriptional repression) signature appears at 39–43; that stretch reads LRLGL. The PB1 domain occupies 158–245; that stretch reads FLYVKVSMDG…SCRRLRIMKG (88 aa).

The protein belongs to the Aux/IAA family. In terms of assembly, homodimers and heterodimers. Highly expressed in flowers. Expressed in roots and shoots.

The protein localises to the nucleus. Aux/IAA proteins are short-lived transcriptional factors that function as repressors of early auxin response genes at low auxin concentrations. The protein is Auxin-responsive protein IAA3 (IAA3) of Oryza sativa subsp. japonica (Rice).